We begin with the raw amino-acid sequence, 822 residues long: ATP-dependent zinc metalloprotease FtsH (822 aa).

Over 1–76 (MEFNKLELLI…NQKEPGKARK (76 aa)) the chain is Cytoplasmic. Positions 44–54 (SLDQPSDAPSN) are enriched in polar residues. The tract at residues 44-71 (SLDQPSDAPSNNKKRNLDQPDNPNQKEP) is disordered. A helical membrane pass occupies residues 77–97 (IIWSFIIIILVLGVLALIILS). The Extracellular segment spans residues 98–251 (GFSFSATSLN…QSMSLPTSYS (154 aa)). The chain crosses the membrane as a helical span at residues 252–272 (FYTAASLVLSILPFILLIGII). The Cytoplasmic portion of the chain corresponds to 273-822 (YYSMRKMGQA…SKESSSDKKK (550 aa)). ATP is bound at residue 347–354 (GPPGTGKT). H569 provides a ligand contact to Zn(2+). E570 is an active-site residue. H573 and D648 together coordinate Zn(2+). Basic and acidic residues predominate over residues 758–794 (KKELEEKKKAEDLIRKAKKESEASSKEEKEMDVEKKV). The interval 758-822 (KKELEEKKKA…SKESSSDKKK (65 aa)) is disordered. Residues 796–805 (KPSASSTEPT) are compositionally biased toward low complexity. A compositionally biased stretch (basic and acidic residues) spans 812–822 (PSKESSSDKKK).

In the central section; belongs to the AAA ATPase family. This sequence in the C-terminal section; belongs to the peptidase M41 family. In terms of assembly, homohexamer. Zn(2+) is required as a cofactor.

The protein resides in the cell membrane. Its function is as follows. Acts as a processive, ATP-dependent zinc metallopeptidase for both cytoplasmic and membrane proteins. Plays a role in the quality control of integral membrane proteins. In Malacoplasma penetrans (strain HF-2) (Mycoplasma penetrans), this protein is ATP-dependent zinc metalloprotease FtsH.